A 104-amino-acid polypeptide reads, in one-letter code: Large ribosomal subunit protein bL21 (104 aa).

Belongs to the bacterial ribosomal protein bL21 family. In terms of assembly, part of the 50S ribosomal subunit. Contacts protein L20.

This protein binds to 23S rRNA in the presence of protein L20. This chain is Large ribosomal subunit protein bL21, found in Agrobacterium fabrum (strain C58 / ATCC 33970) (Agrobacterium tumefaciens (strain C58)).